Consider the following 421-residue polypeptide: E3 ubiquitin protein ligase DRIP1 (421 aa).

The RING-type zinc finger occupies cysteine 16–asparagine 57. 2 stretches are compositionally biased toward polar residues: residues isoleucine 106 to glycine 121 and glutamate 157 to lysine 172. Disordered regions lie at residues isoleucine 106–lysine 198 and proline 216–arginine 307. The segment covering serine 178–lysine 198 has biased composition (basic and acidic residues). Over residues lysine 218 to serine 227 the composition is skewed to low complexity. Residues threonine 244–cysteine 253 are compositionally biased toward basic residues. A compositionally biased stretch (polar residues) spans asparagine 262–valine 271. Basic residues predominate over residues lysine 274–serine 284. The segment covering alanine 285–leucine 294 has biased composition (polar residues).

In terms of assembly, interacts with DREB2A. Autoubiquitinated. As to expression, expressed in roots, leaves and flowers.

It localises to the nucleus. It catalyses the reaction S-ubiquitinyl-[E2 ubiquitin-conjugating enzyme]-L-cysteine + [acceptor protein]-L-lysine = [E2 ubiquitin-conjugating enzyme]-L-cysteine + N(6)-ubiquitinyl-[acceptor protein]-L-lysine.. It functions in the pathway protein modification; protein ubiquitination. Functionally, E3 ubiquitin-protein ligase that acts as a negative regulator of the response to water stress. Mediates ubiquitination and subsequent proteasomal degradation of the drought-induced transcriptional activator DREB2A. Functionally redundant with DRIP2. This is E3 ubiquitin protein ligase DRIP1 (DRIP1) from Arabidopsis thaliana (Mouse-ear cress).